The sequence spans 518 residues: AarF domain-containing kinase 1 (518 aa).

Residues 149 to 468 (SFEREPLGTA…SKCCVQSSYA (320 aa)) enclose the Protein kinase domain. ATP is bound by residues 155 to 163 (LGTASLAQV) and K177. D309 acts as the Proton acceptor in catalysis.

Belongs to the protein kinase superfamily. ADCK protein kinase family.

The protein resides in the mitochondrion. Its function is as follows. Essential for maintaining mitochondrial cristae formation and mitochondrial function by acting via YME1L to regulate the mitochondrial structural proteins Opa1 and Mitofilin. This function is likely to be kinase-independent. Functions in tracheal development and larval molting probably by acting in sterol modification and/or intracellular lipid trafficking. The action of this enzyme is not yet clear. It is not known if it has protein kinase activity and what type of substrate it would phosphorylate (Ser, Thr or Tyr). The sequence is that of AarF domain-containing kinase 1 from Drosophila melanogaster (Fruit fly).